The following is a 339-amino-acid chain: Methylglutaconyl-CoA hydratase, mitochondrial (339 aa).

Residues 1-67 constitute a mitochondrion transit peptide; that stretch reads MAAAVAAAPG…AGGPAPKRGY (67 aa). Lys100 is subject to N6-acetyllysine; alternate. Lys100 is modified (N6-succinyllysine; alternate). The segment at 105 to 119 is RNA-binding; the sequence is KNLIKMLSKAVDALK. At Lys109 the chain carries N6-succinyllysine. An N6-acetyllysine; alternate mark is found at Lys113 and Lys144. 2 positions are modified to N6-succinyllysine; alternate: Lys113 and Lys144. Residues Lys148 and Lys160 each carry the N6-succinyllysine modification. Lys204 and Lys211 each carry N6-acetyllysine; alternate. An N6-succinyllysine; alternate mark is found at Lys204 and Lys211. N6-succinyllysine is present on Lys329.

This sequence belongs to the enoyl-CoA hydratase/isomerase family. As to quaternary structure, homohexamer.

The protein localises to the mitochondrion. It carries out the reaction (3S)-3-hydroxy-3-methylglutaryl-CoA = 3-methyl-(2E)-glutaconyl-CoA + H2O. It catalyses the reaction (3S)-citramalyl-CoA = itaconyl-CoA + H2O. The enzyme catalyses 3-hydroxyisovaleryl-CoA = 3-methylbut-2-enoyl-CoA + H2O. The catalysed reaction is (S)-3-hydroxyglutaryl-CoA = (2E)-glutaconyl-CoA + H2O. It participates in amino-acid degradation; L-leucine degradation; (S)-3-hydroxy-3-methylglutaryl-CoA from 3-isovaleryl-CoA: step 3/3. Catalyzes the fifth step in the leucine degradation pathway, the reversible hydration of 3-methylglutaconyl-CoA (3-MG-CoA) to 3-hydroxy-3-methylglutaryl-CoA (HMG-CoA). Can catalyze the reverse reaction but at a much lower rate in vitro. HMG-CoA is then quickly degraded by another enzyme (such as HMG-CoA lyase) to give acetyl-CoA and acetoacetate. Uses other substrates such as (2E)-glutaconyl-CoA efficiently in vitro, and to a lesser extent 3-methylcrotonyl-CoA (3-methyl-(2E)-butenoyl-CoA), crotonyl-CoA ((2E)-butenoyl-CoA) and 3-hydroxybutanoyl-CoA (the missing carboxylate reduces affinity to the active site). Originally it was identified as an RNA-binding protein as it binds to AU-rich elements (AREs) in vitro. AREs direct rapid RNA degradation and mRNA deadenylation. Might have itaconyl-CoA hydratase activity, converting itaconyl-CoA into citramalyl-CoA in the C5-dicarboxylate catabolism pathway. The C5-dicarboxylate catabolism pathway is required to detoxify itaconate, an antimicrobial metabolite and immunomodulator produced by macrophages during certain infections, that can act as a vitamin B12-poisoning metabolite. The chain is Methylglutaconyl-CoA hydratase, mitochondrial (AUH) from Homo sapiens (Human).